The primary structure comprises 387 residues: 3-ketoacyl-CoA thiolase (387 aa).

The active-site Acyl-thioester intermediate is the Cys91. Active-site proton acceptor residues include His343 and Cys373.

The protein belongs to the thiolase-like superfamily. Thiolase family. In terms of assembly, heterotetramer of two alpha chains (FadB) and two beta chains (FadA).

It localises to the cytoplasm. It catalyses the reaction an acyl-CoA + acetyl-CoA = a 3-oxoacyl-CoA + CoA. The protein operates within lipid metabolism; fatty acid beta-oxidation. Its function is as follows. Catalyzes the final step of fatty acid oxidation in which acetyl-CoA is released and the CoA ester of a fatty acid two carbons shorter is formed. This chain is 3-ketoacyl-CoA thiolase, found in Aeromonas salmonicida (strain A449).